The primary structure comprises 380 residues: Pregnancy-associated glycoprotein 4 (380 aa).

Positions 1-15 are cleaved as a signal peptide; it reads MKWLVLLGLVAFSEC. Positions 16–53 are cleaved as a propeptide — activation peptide; that stretch reads IFKIPLRRVKTMRKTLSGKNMLNDVLKEHPYRLPQISF. Positions 71-377 constitute a Peptidase A1 domain; that stretch reads YVGNITIGTP…DRGNDRIGLA (307 aa). N-linked (GlcNAc...) asparagine glycosylation is present at Asn74. Asp89 is an active-site residue. Cys102 and Cys107 form a disulfide bridge. An N-linked (GlcNAc...) asparagine glycan is attached at Asn125. Residues Cys261 and Cys265 are joined by a disulfide bond. The active site involves Asp270. Cys303 and Cys337 are oxidised to a cystine.

Belongs to the peptidase A1 family. Trophoblast and placental tissue. Produced specifically in the invasive binucleate cells of the placenta.

It localises to the secreted. The protein localises to the extracellular space. In Ovis aries (Sheep), this protein is Pregnancy-associated glycoprotein 4.